Here is a 500-residue protein sequence, read N- to C-terminus: Probable trehalose-phosphate phosphatase 8 (500 aa).

The protein belongs to the trehalose phosphatase family. A divalent metal cation is required as a cofactor.

It catalyses the reaction alpha,alpha-trehalose 6-phosphate + H2O = alpha,alpha-trehalose + phosphate. Its pathway is glycan biosynthesis; trehalose biosynthesis. In terms of biological role, removes the phosphate from trehalose 6-phosphate to produce free trehalose. Trehalose accumulation in plant may improve abiotic stress tolerance. This is Probable trehalose-phosphate phosphatase 8 (TPP8) from Oryza sativa subsp. japonica (Rice).